Consider the following 552-residue polypeptide: CTP synthase (552 aa).

The interval 1–270 (MTKYVFVTGG…DRIICEELKL (270 aa)) is amidoligase domain. Position 13 (Ser-13) interacts with CTP. Ser-13 provides a ligand contact to UTP. ATP is bound by residues 14–19 (SLGKGI) and Asp-71. Positions 71 and 144 each coordinate Mg(2+). Residues 151–153 (DIE), 191–196 (KTKPTQ), and Lys-227 each bind CTP. Residues 191 to 196 (KTKPTQ) and Lys-227 contribute to the UTP site. A Glutamine amidotransferase type-1 domain is found at 295–547 (TIGMVGKYVD…VEAALANKQA (253 aa)). Residue Gly-356 participates in L-glutamine binding. Cys-383 acts as the Nucleophile; for glutamine hydrolysis in catalysis. Residues 384–387 (LGMQ), Glu-407, and Arg-473 contribute to the L-glutamine site. Active-site residues include His-520 and Glu-522.

This sequence belongs to the CTP synthase family. As to quaternary structure, homotetramer.

The catalysed reaction is UTP + L-glutamine + ATP + H2O = CTP + L-glutamate + ADP + phosphate + 2 H(+). It carries out the reaction L-glutamine + H2O = L-glutamate + NH4(+). It catalyses the reaction UTP + NH4(+) + ATP = CTP + ADP + phosphate + 2 H(+). It functions in the pathway pyrimidine metabolism; CTP biosynthesis via de novo pathway; CTP from UDP: step 2/2. Allosterically activated by GTP, when glutamine is the substrate; GTP has no effect on the reaction when ammonia is the substrate. The allosteric effector GTP functions by stabilizing the protein conformation that binds the tetrahedral intermediate(s) formed during glutamine hydrolysis. Inhibited by the product CTP, via allosteric rather than competitive inhibition. Catalyzes the ATP-dependent amination of UTP to CTP with either L-glutamine or ammonia as the source of nitrogen. Regulates intracellular CTP levels through interactions with the four ribonucleotide triphosphates. In Burkholderia cenocepacia (strain HI2424), this protein is CTP synthase.